The following is a 437-amino-acid chain: MERECEKSVVVAVVTEPRFTQRYRDYLEKQKLLDRQYRVEKLRDGTVALPVLAETLSEHHLQELKNRVAPGSTCKLTQLLDPLPSKKARVCSPAQRLCLEVRRWVEDRGVTWSTELEADLPRSWQRHGDLMLLSEDCFQATQWKRLEPELWETVASALGVQRLAKRGRVLPDGTRTPTVTLLLGDHGWVEHVDNGIRYKFDVTQCMFSFGNITEKLRVASLSCAGEVLVDLYAGIGYFTLPFLVHAGAAFVHACEWNPHAVVALRKNLEINGVADRCQIHFGDNRKLKLSNTADRVNLGLIPSSEEGWPIACQVLRKDVGGILHIHQNVESFSGKNPQPPGSSNMEKKHWPHPQKITTDKQGNRTTGSCMGEMSSASKPEWQRWAESAESQIASLLHQVHGKPWRTRILHVHPVKSYAPHVDHIVLDLECRPCPLVG.

S-adenosyl-L-methionine-binding positions include Ser-208, Lys-215, Glu-255, and 283-284 (DN). Residues 331 to 344 (SFSGKNPQPPGSSN) show a composition bias toward polar residues. The interval 331-374 (SFSGKNPQPPGSSNMEKKHWPHPQKITTDKQGNRTTGSCMGEMS) is disordered.

Belongs to the class I-like SAM-binding methyltransferase superfamily. TRM5/TYW2 family.

It carries out the reaction 4-demethylwyosine(37) in tRNA(Phe) + S-adenosyl-L-methionine = 4-demethyl-7-[(3S)-3-amino-3-carboxypropyl]wyosine(37) in tRNA(Phe) + S-methyl-5'-thioadenosine + H(+). The protein operates within tRNA modification; wybutosine-tRNA(Phe) biosynthesis. Functionally, S-adenosyl-L-methionine-dependent transferase that acts as a component of the wybutosine biosynthesis pathway. Wybutosine is a hyper modified guanosine with a tricyclic base found at the 3'-position adjacent to the anticodon of eukaryotic phenylalanine tRNA. Catalyzes the transfer of the alpha-amino-alpha-carboxypropyl (acp) group from S-adenosyl-L-methionine to the C-7 position of 4-demethylwyosine (imG-14) to produce wybutosine-86. The protein is tRNA wybutosine-synthesizing protein 2 homolog (Trmt12) of Rattus norvegicus (Rat).